A 371-amino-acid chain; its full sequence is MSNDSIHWEARYLPAGPPRLLGWNVPAEELIHIPEHWLVYPEPNPSLHYLLALLYILFTFLALLGNGLVIWIFCAAKSLRTPSNMFVVNLAICDFFMMIKTPIFIYNSFNTGFALGNLGCQIFAVIGSLTGIGAAITNAAIAYDRYSTIARPLDGKLSRGQVILFIVLIWTYTIPWALMPVMGVWGRFVPEGFLTSCSFDYLTDTNEIRIFVATIFTFSYCIPMILIIYYYSQIVSHVVNHEKALREQAKKMNVDSLRSNANTSSQSAEIRIAKAAITICFLYVLSWTPYGVMSMIGAFGNKALLTPGVTMIPACTCKAVACLDPYVYAISHPKYRLELQKRLPWLELQEKPISDSTSTTTETVNTPPASS.

The Extracellular portion of the chain corresponds to 1 to 52; that stretch reads MSNDSIHWEARYLPAGPPRLLGWNVPAEELIHIPEHWLVYPEPNPSLHYLLA. Asn-3 carries N-linked (GlcNAc...) asparagine glycosylation. Residues 53-73 traverse the membrane as a helical segment; that stretch reads LLYILFTFLALLGNGLVIWIF. Over 74–84 the chain is Cytoplasmic; sequence CAAKSLRTPSN. A helical membrane pass occupies residues 85–105; the sequence is MFVVNLAICDFFMMIKTPIFI. Residues 106 to 121 lie on the Extracellular side of the membrane; that stretch reads YNSFNTGFALGNLGCQ. A disulfide bridge links Cys-120 with Cys-197. The helical transmembrane segment at 122-142 threads the bilayer; it reads IFAVIGSLTGIGAAITNAAIA. Over 143–161 the chain is Cytoplasmic; it reads YDRYSTIARPLDGKLSRGQ. Residues 162-182 form a helical membrane-spanning segment; the sequence is VILFIVLIWTYTIPWALMPVM. Over 183 to 209 the chain is Extracellular; that stretch reads GVWGRFVPEGFLTSCSFDYLTDTNEIR. Residues 210 to 230 traverse the membrane as a helical segment; the sequence is IFVATIFTFSYCIPMILIIYY. Residues 231-278 are Cytoplasmic-facing; it reads YSQIVSHVVNHEKALREQAKKMNVDSLRSNANTSSQSAEIRIAKAAIT. A helical transmembrane segment spans residues 279 to 299; sequence ICFLYVLSWTPYGVMSMIGAF. Over 300–302 the chain is Extracellular; sequence GNK. Residues 303–323 form a helical membrane-spanning segment; it reads ALLTPGVTMIPACTCKAVACL. Position 318 is an N6-(retinylidene)lysine (Lys-318). At 324 to 371 the chain is on the cytoplasmic side; sequence DPYVYAISHPKYRLELQKRLPWLELQEKPISDSTSTTTETVNTPPASS.

It belongs to the G-protein coupled receptor 1 family. Opsin subfamily. Post-translationally, phosphorylated on some or all of the serine and threonine residues present in the C-terminal region. As to expression, expressed in the dorsal region of the retina.

It is found in the membrane. In terms of biological role, visual pigments are the light-absorbing molecules that mediate vision. They consist of an apoprotein, opsin, covalently linked to 11-cis-retinal. In Apis mellifera (Honeybee), this protein is Opsin, ultraviolet-sensitive (UVOP).